The following is a 219-amino-acid chain: Deoxyribose-phosphate aldolase (219 aa).

Asp-92 functions as the Proton donor/acceptor in the catalytic mechanism. Lys-154 serves as the catalytic Schiff-base intermediate with acetaldehyde. Residue Lys-183 is the Proton donor/acceptor of the active site.

It belongs to the DeoC/FbaB aldolase family. DeoC type 1 subfamily.

The protein localises to the cytoplasm. It carries out the reaction 2-deoxy-D-ribose 5-phosphate = D-glyceraldehyde 3-phosphate + acetaldehyde. Its pathway is carbohydrate degradation; 2-deoxy-D-ribose 1-phosphate degradation; D-glyceraldehyde 3-phosphate and acetaldehyde from 2-deoxy-alpha-D-ribose 1-phosphate: step 2/2. Functionally, catalyzes a reversible aldol reaction between acetaldehyde and D-glyceraldehyde 3-phosphate to generate 2-deoxy-D-ribose 5-phosphate. This chain is Deoxyribose-phosphate aldolase, found in Dictyoglomus turgidum (strain DSM 6724 / Z-1310).